The primary structure comprises 171 residues: Dual specificity protein phosphatase OPG106 (171 aa).

It belongs to the protein-tyrosine phosphatase family. Non-receptor class dual specificity subfamily. In terms of assembly, homodimer.

The protein localises to the virion. Its subcellular location is the host cytoplasm. The catalysed reaction is O-phospho-L-tyrosyl-[protein] + H2O = L-tyrosyl-[protein] + phosphate. It catalyses the reaction O-phospho-L-seryl-[protein] + H2O = L-seryl-[protein] + phosphate. In terms of biological role, serine/tyrosine phosphatase which down-regulates cellular antiviral response by dephosphorylating activated host STAT1 and blocking interferon (IFN)-stimulated innate immune responses. Dephosphorylates the OPG144 protein. In Monkeypox virus, this protein is Dual specificity protein phosphatase OPG106 (OPG106).